The sequence spans 190 residues: MKAESGSADAKLPLPPPVGRKRRGLAILDFLLRLLAIGATLSAAIAMGTNNETLKFFTQFFQFNARFYNLSAFIYFVIANATVGLYLLLSLPFSIFDIVRPRAAAFRVLLIFFDTVMVAVCTSGAAAATAIMYVARRGNTKTNWFSICQQFNSFCDQATGALGASFAAVVLLILLVLLSASTLHRQRADF.

The Cytoplasmic segment spans residues 1-24 (MKAESGSADAKLPLPPPVGRKRRG). A helical transmembrane segment spans residues 25–45 (LAILDFLLRLLAIGATLSAAI). The Extracellular portion of the chain corresponds to 46 to 72 (AMGTNNETLKFFTQFFQFNARFYNLSA). N-linked (GlcNAc...) asparagine glycosylation is found at asparagine 51 and asparagine 69. The chain crosses the membrane as a helical span at residues 73-93 (FIYFVIANATVGLYLLLSLPF). The Cytoplasmic portion of the chain corresponds to 94 to 107 (SIFDIVRPRAAAFR). Residues 108–128 (VLLIFFDTVMVAVCTSGAAAA) form a helical membrane-spanning segment. The Extracellular portion of the chain corresponds to 129-157 (TAIMYVARRGNTKTNWFSICQQFNSFCDQ). A helical membrane pass occupies residues 158–178 (ATGALGASFAAVVLLILLVLL). Over 179 to 190 (SASTLHRQRADF) the chain is Cytoplasmic.

The protein belongs to the Casparian strip membrane proteins (CASP) family. Homodimer and heterodimers.

The protein resides in the cell membrane. Regulates membrane-cell wall junctions and localized cell wall deposition. Required for establishment of the Casparian strip membrane domain (CSD) and the subsequent formation of Casparian strips, a cell wall modification of the root endodermis that determines an apoplastic barrier between the intraorganismal apoplasm and the extraorganismal apoplasm and prevents lateral diffusion. This is Casparian strip membrane protein 1 from Pinus taeda (Loblolly pine).